The following is a 424-amino-acid chain: Splicing factor 3B subunit 4 (424 aa).

Alanine 2 carries the post-translational modification N-acetylalanine. RRM domains are found at residues 13–91 (ATVY…KASA) and 100–179 (ANIF…YAFK). Tyrosine 56 is subject to Phosphotyrosine. A disordered region spans residues 207 to 424 (PHQLFADAPP…RGPLRGPLPQ (218 aa)). Low complexity predominate over residues 222–231 (NPVVSSLGSG). Over residues 232 to 268 (LPPPGMPPPGSFPPPVPPPGALPPGIPPAMPPPPMPP) the composition is skewed to pro residues. Low complexity-rich tracts occupy residues 269-280 (GAAGHGPPSAGT) and 303-323 (HPGM…GHPH). 2 stretches are compositionally biased toward pro residues: residues 332-381 (QPPP…PLMP) and 388-424 (PPRP…PLPQ).

The protein belongs to the SF3B4 family. Component of the 17S U2 SnRNP complex, a ribonucleoprotein complex that contains small nuclear RNA (snRNA) U2 and a number of specific proteins. Part of the SF3B subcomplex of the 17S U2 SnRNP complex. SF3B associates with the splicing subcomplex SF3A and a 12S RNA unit to form the U2 small nuclear ribonucleoproteins complex (U2 snRNP). SF3B4 has been found in complex spliceosome 'B' and 'C' as well. Component of the minor (U12-type spliceosome) spliceosome. Found in a complex with PRMT9, SF3B2 and SF3B4.

The protein resides in the nucleus. Component of the 17S U2 SnRNP complex of the spliceosome, a large ribonucleoprotein complex that removes introns from transcribed pre-mRNAs. The 17S U2 SnRNP complex (1) directly participates in early spliceosome assembly and (2) mediates recognition of the intron branch site during pre-mRNA splicing by promoting the selection of the pre-mRNA branch-site adenosine, the nucleophile for the first step of splicing. Within the 17S U2 SnRNP complex, SF3B4 is part of the SF3B subcomplex, which is required for 'A' complex assembly formed by the stable binding of U2 snRNP to the branchpoint sequence in pre-mRNA. Sequence independent binding of SF3A and SF3B subcomplexes upstream of the branch site is essential, it may anchor U2 snRNP to the pre-mRNA. May also be involved in the assembly of the 'E' complex. Also acts as a component of the minor spliceosome, which is involved in the splicing of U12-type introns in pre-mRNAs. This Homo sapiens (Human) protein is Splicing factor 3B subunit 4 (SF3B4).